A 461-amino-acid polypeptide reads, in one-letter code: Deoxyguanosinetriphosphate triphosphohydrolase-like protein (461 aa).

The interval 22 to 41 (ERFLPDPPREKDNRPPFRRD) is disordered. Basic and acidic residues predominate over residues 24-41 (FLPDPPREKDNRPPFRRD). Residues 72-285 (RLTHSLEVAQ…MELADDIAYG (214 aa)) enclose the HD domain.

Belongs to the dGTPase family. Type 2 subfamily.

The sequence is that of Deoxyguanosinetriphosphate triphosphohydrolase-like protein from Haemophilus influenzae (strain PittGG).